The sequence spans 40 residues: Proteinase inhibitor IIB (40 aa).

Disulfide bonds link Cys-2–Cys-16, Cys-6–Cys-28, and Cys-12–Cys-38.

The protein belongs to the protease inhibitor I20 (potato type II proteinase inhibitor) family.

It is found in the secreted. In terms of biological role, inhibits chymotrypsin and subtilisin strongly. This chain is Proteinase inhibitor IIB, found in Solanum tuberosum (Potato).